Reading from the N-terminus, the 198-residue chain is Holliday junction resolvase RecU (198 aa).

The Mg(2+) site is built by T83, D85, E98, and Q117.

This sequence belongs to the RecU family. Mg(2+) is required as a cofactor.

The protein resides in the cytoplasm. It carries out the reaction Endonucleolytic cleavage at a junction such as a reciprocal single-stranded crossover between two homologous DNA duplexes (Holliday junction).. In terms of biological role, endonuclease that resolves Holliday junction intermediates in genetic recombination. Cleaves mobile four-strand junctions by introducing symmetrical nicks in paired strands. Promotes annealing of linear ssDNA with homologous dsDNA. Required for DNA repair, homologous recombination and chromosome segregation. The polypeptide is Holliday junction resolvase RecU (Streptococcus thermophilus (strain CNRZ 1066)).